Consider the following 457-residue polypeptide: MKIHFVGIGGIGMSAVALHEFLNGNDVYGSNIEETERTAYLRKLGIPIFVPHSADNWYDPDLVIKTPAVRDDNPEIVRARMERVPVENRLHYFRDILKREKKEEFAVTGTDGKTTTTAMVAHVLKHLKKSPTVFLGGIMDSLEHGNYEKGNGPVVYELDESEEFFSEFSPNYLIITNARGDHLENYGNSLSRYRSAFEKISRNTDLVVTFAEDELTSHLGDVTFGVKKGTYTLEMRSASRAEQKAVVEKNGKRYLELKLKVPGFHNVLNALAVIALFDSLGYDLAPVLEALEEFRGVHRRFSIAFHDPETNIYVIDDYAHTPDEIRNLLQTAKEVFENEKIVVIFQPHRYTRLEREDGNFAKALQLADEVVVTEVYDAFEERKNGISGKMIWDSLKSLGKEAYFVEKLPELEKVIPVSENTVFLFVGAGDIIHSSRRFVERYQSSKSSPSRVLGSNK.

G109–T115 lines the ATP pocket.

The protein belongs to the MurCDEF family.

It localises to the cytoplasm. The catalysed reaction is UDP-N-acetyl-alpha-D-muramate + L-alanine + ATP = UDP-N-acetyl-alpha-D-muramoyl-L-alanine + ADP + phosphate + H(+). The protein operates within cell wall biogenesis; peptidoglycan biosynthesis. Cell wall formation. The polypeptide is UDP-N-acetylmuramate--L-alanine ligase (Thermotoga petrophila (strain ATCC BAA-488 / DSM 13995 / JCM 10881 / RKU-1)).